The sequence spans 1093 residues: Leucine-rich repeats and immunoglobulin-like domains protein 1 (1093 aa).

An N-terminal signal peptide occupies residues 1 to 34 (MARPVRGGLGAPRRSPCLLLLWLLLLRLEPVTAA). The 34-residue stretch at 35 to 68 (AGPRAPCAAACTCAGDSLDCGGRGLAALPGDLPS) folds into the LRRNT domain. At 35–794 (AGPRAPCAAA…GCRKDGTTVG (760 aa)) the chain is on the extracellular side. The cysteines at positions 45 and 54 are disulfide-linked. LRR repeat units follow at residues 69–90 (WTRS…GFED), 93–114 (NLQE…GAAS), 116–137 (HVVS…QLKA), 140–161 (SLEV…CFPH), 164–185 (PIKE…AFDG), 189–210 (SLLT…AFKL), 212–233 (RLTQ…TFQG), 236–257 (SLEV…AFWG), 260–281 (KMHV…SLYG), 284–305 (ALHQ…GWSF), 308–329 (KLHE…SLAE), 332–353 (SLSV…AFKG), 356–378 (SLRV…SGAF), 383–404 (SLSK…AFSG), and 407–428 (GLEH…AFVK). Residue N74 is glycosylated (N-linked (GlcNAc...) asparagine). N150 carries an N-linked (GlcNAc...) asparagine glycan. N246 carries N-linked (GlcNAc...) asparagine glycosylation. N-linked (GlcNAc...) asparagine glycans are attached at residues N292 and N318. Residues 440 to 491 (DSFLCDCQLKWLPPWLIGRMLQAFVTATCAHPESLKGQSIFSVPPESFVCDD) enclose the LRRCT domain. Intrachain disulfides connect C444-C468, C446-C489, C516-C577, and C620-C672. Ig-like C2-type domains are found at residues 495–594 (PQII…ARLT), 599–688 (PSFT…ATLT), and 693–779 (PSLV…SQLS). N-linked (GlcNAc...) asparagine glycosylation is present at N684. A disulfide bridge connects residues C714 and C763. The chain crosses the membrane as a helical span at residues 795–815 (IFTIAVVSSIVLTSLVWVCII). At 816 to 1093 (YQTRKKSEEY…RVPLLLAPKS (278 aa)) the chain is on the cytoplasmic side. Disordered regions lie at residues 946–983 (AFHP…CSRT) and 1063–1093 (PKAC…APKS).

Interacts (via extracellular LRR and Ig-like domains) with EGFR/ERBB1, ERBB2, ERBB3 and ERBB4 (via extracellular domain). The physiological relevance of the interaction is controversial; LRIG1 may have low affinity for EGFR, and interaction may occur only when high levels of both proteins are present. Widely expressed.

It localises to the cell membrane. Its function is as follows. Acts as a feedback negative regulator of signaling by receptor tyrosine kinases, through a mechanism that involves enhancement of receptor ubiquitination and accelerated intracellular degradation. The sequence is that of Leucine-rich repeats and immunoglobulin-like domains protein 1 from Homo sapiens (Human).